The sequence spans 95 residues: Large ribosomal subunit protein bL27 (95 aa).

Positions 1–8 are excised as a propeptide; sequence MEMNLQFF. The tract at residues 1-34 is disordered; the sequence is MEMNLQFFSHHKGGGSTSNGRDSAGRRLGTKRAD.

Belongs to the bacterial ribosomal protein bL27 family. In terms of processing, the N-terminus is cleaved by ribosomal processing cysteine protease Prp.

This is Large ribosomal subunit protein bL27 from Pediococcus pentosaceus (strain ATCC 25745 / CCUG 21536 / LMG 10740 / 183-1w).